An 800-amino-acid polypeptide reads, in one-letter code: MKARRNKKQVPSFRKLIKTSKVKLEYKLKNKQFKQQSTIKKYRKEQRKLRQAVKDAVSKKPFPLEDPKSKRPVKGMEREEEDEEDQALPLDMMDDDDLQLMKDLGQKASFLTRDLSSSEPVHIKKRKHESVIDKYEKMPRTLQTAPEKELIHLLPIKDKSGIIPQTREKPVTDIQQEEEDEEELEVEEEVVENPIQELTIEEHLIVRKKKLQEKKIQIATLASSILSDPESNIKKLKELRSMLMEQDPDVAVTVRKLVIISLMELFKDITPSYKIRPLTEAEKSTKIRKETQKLREFEEGLVSQYKFYLENLEQIVKDWKQRKLKKSNVVSLKAYKGLAEVAVKSLCELLVALPHFNFHNNIIVLIVPLMNDGSKLVSEMCCEAVKKLFKQDKLGQASLGVIKVISGFVKGRNYEVRPEMLKTFLCLRIKEVEVKKDTEDINKPKKFMTFKEKRKTLSRMQRKWKKAEEKLERELREAEASESTERKLKLHTETLNIVFVTYFRILKKAQRSPLLPAVLEGLAKFAHLINVEFFDDLLVVLHTLIESGDLSYQESLHCVQTAFHILSGQGDVLNIDPMKFYTHLYKTLFKLHAGATNDGIEIVLHCLDVMLSKRRKQVSHQRALAFIKRLCTLALQVLPNSSIGLLATTRILMHTFPRTDLLLDNESQGSGVFLPELEEPEYCNAQNTALWELHALRRHYHPVVQRFAVHLLAGAPSEGSEALKPELSRRSAVELFEAYSMAAMTFNPPVEPSNSKKKDKLLQGDSFLNEDLNQLIKRYCNEVTTEIPLDFTKCLKTSVQ.

Residues 37–90 (STIKKYRKEQRKLRQAVKDAVSKKPFPLEDPKSKRPVKGMEREEEDEEDQALPL) form a disordered region. The span at 40–51 (KKYRKEQRKLRQ) shows a compositional bias: basic residues. Residues 52–77 (AVKDAVSKKPFPLEDPKSKRPVKGME) are compositionally biased toward basic and acidic residues. The segment covering 78–90 (REEEDEEDQALPL) has biased composition (acidic residues). Residue lysine 333 forms a Glycyl lysine isopeptide (Lys-Gly) (interchain with G-Cter in SUMO2) linkage. Residues 450 to 489 (FKEKRKTLSRMQRKWKKAEEKLERELREAEASESTERKLK) are a coiled coil.

The protein belongs to the CBF/MAK21 family.

Its subcellular location is the nucleus. The protein resides in the nucleolus. This is Nucleolar complex protein 3 homolog (NOC3L) from Cricetulus griseus (Chinese hamster).